The chain runs to 221 residues: uncharacterized protein (221 aa).

Topologically, residues 1–45 (MYAPIRSPITELNESTPSSIPVATSYATCSASFAKLVALLVDDMA) are extracellular. A helical transmembrane segment spans residues 46 to 66 (GLSIVLSEIYIYFKLLFLIVI). At 67 to 221 (TESIQNKLED…KYIVVIKVEQ (155 aa)) the chain is on the cytoplasmic side.

It localises to the host membrane. This is an uncharacterized protein from Acidianus filamentous virus 1 (isolate United States/Yellowstone) (AFV-1).